A 184-amino-acid chain; its full sequence is Cytosolic Prostaglandin E synthase (184 aa).

The CS domain maps to 7 to 96; sequence LIPPPVSWAQ…AAGPYWSSLT (90 aa). The segment at 115–184 is disordered; it reads ESDDEEGDQK…EGDKEKKPAA (70 aa). Residues serine 116, serine 127, serine 135, serine 156, and serine 162 each carry the phosphoserine modification. Over residues 147–158 the composition is skewed to acidic residues; that stretch reads FNVDDEEEDSDD. Residues 175–184 show a composition bias toward basic and acidic residues; it reads EGDKEKKPAA.

It belongs to the p23/wos2 family.

The protein resides in the cytoplasm. It catalyses the reaction prostaglandin H2 = prostaglandin E2. Functionally, cytosolic prostaglandin synthase that catalyzes the oxidoreduction of prostaglandin endoperoxide H2 (PGH2) to prostaglandin E2 (PGE2). Through production of PGE2 may regulate the activity of non-muscle myosin II in an autocrine or paracrine fashion; this may influence border cell and nurse cell stiffness to facilitate border cell migration during oogenesis. This Drosophila melanogaster (Fruit fly) protein is Cytosolic Prostaglandin E synthase.